The chain runs to 91 residues: MSLNSAEKAEIINEYKRGDKDTGSPEVQVSLITGRIKYLTDHFKENKKDFHSRRGLQELVNKRRKLLKYLKRNDQARYQTLIQNLGLRDSY.

The protein belongs to the universal ribosomal protein uS15 family. In terms of assembly, part of the 30S ribosomal subunit. Forms a bridge to the 50S subunit in the 70S ribosome, contacting the 23S rRNA.

In terms of biological role, one of the primary rRNA binding proteins, it binds directly to 16S rRNA where it helps nucleate assembly of the platform of the 30S subunit by binding and bridging several RNA helices of the 16S rRNA. Its function is as follows. Forms an intersubunit bridge (bridge B4) with the 23S rRNA of the 50S subunit in the ribosome. The chain is Small ribosomal subunit protein uS15 from Legionella pneumophila (strain Paris).